A 428-amino-acid chain; its full sequence is Enolase (428 aa).

Q165 lines the (2R)-2-phosphoglycerate pocket. E207 serves as the catalytic Proton donor. The Mg(2+) site is built by D244, E285, and D312. (2R)-2-phosphoglycerate-binding residues include K337, R366, S367, and K388. Residue K337 is the Proton acceptor of the active site.

The protein belongs to the enolase family. In terms of assembly, component of the RNA degradosome, a multiprotein complex involved in RNA processing and mRNA degradation. Mg(2+) serves as cofactor.

It localises to the cytoplasm. The protein localises to the secreted. It is found in the cell surface. The catalysed reaction is (2R)-2-phosphoglycerate = phosphoenolpyruvate + H2O. The protein operates within carbohydrate degradation; glycolysis; pyruvate from D-glyceraldehyde 3-phosphate: step 4/5. Catalyzes the reversible conversion of 2-phosphoglycerate (2-PG) into phosphoenolpyruvate (PEP). It is essential for the degradation of carbohydrates via glycolysis. The protein is Enolase of Coxiella burnetii (strain CbuK_Q154) (Coxiella burnetii (strain Q154)).